The chain runs to 632 residues: 2-hydroxyacyl-CoA lyase 2 (632 aa).

The helical transmembrane segment at 10–30 (AWGFFSSFLLLAFGTLVAALL) threads the bilayer. Residue Glu98 coordinates thiamine diphosphate. The interval 470–550 (DFVGTAAYLV…VMALIGNDAG (81 aa)) is thiamine pyrophosphate binding. Residues Asp521 and Asn547 each contribute to the Mg(2+) site.

This sequence belongs to the TPP enzyme family. Mg(2+) serves as cofactor. The cofactor is thiamine diphosphate.

The protein localises to the endoplasmic reticulum membrane. The catalysed reaction is 2-hydroxyoctadecanoyl-CoA = heptadecanal + formyl-CoA. The enzyme catalyses (2R)-hydroxyhexadecanoyl-CoA = pentadecanal + formyl-CoA. In terms of biological role, endoplasmic reticulum 2-OH acyl-CoA lyase involved in the cleavage (C1 removal) reaction in the fatty acid alpha-oxydation in a thiamine pyrophosphate (TPP)-dependent manner. Involved in the phytosphingosine degradation pathway. In Bos taurus (Bovine), this protein is 2-hydroxyacyl-CoA lyase 2 (ILVBL).